Reading from the N-terminus, the 107-residue chain is Glutaredoxin 4 (107 aa).

Residues 4–106 (IEKIERQIKD…KIISNAVLNS (103 aa)) form the Glutaredoxin domain. Lys21 is a glutathione binding site. Residue Cys29 coordinates [2Fe-2S] cluster. Residues Arg58, Phe70, and 83 to 84 (CS) contribute to the glutathione site.

It belongs to the glutaredoxin family. Monothiol subfamily. Homodimer.

Its subcellular location is the cytoplasm. Monothiol glutaredoxin involved in the biogenesis of iron-sulfur clusters. The chain is Glutaredoxin 4 (grxD) from Buchnera aphidicola subsp. Schizaphis graminum (strain Sg).